The chain runs to 182 residues: Succinate dehydrogenase cytochrome b560 subunit, mitochondrial (182 aa).

A helical transmembrane segment spans residues 65–94 (LTWMLSGFHRISGCVMAGTLLVGGIGFAVL). Over 95–114 (PFDFTAFVDFIRSWNLPCAV) the chain is Mitochondrial intermembrane. Residues 115–139 (TAVFKYIIAFPIIFHTLNGIRFLGF) traverse the membrane as a helical segment. His129 provides a ligand contact to heme. Residues 140 to 147 (DLAKGVNN) lie on the Mitochondrial matrix side of the membrane. A helical membrane pass occupies residues 148-169 (VGQIYKSGYLVSGLSAILALAI). At 170 to 172 (VFN) the chain is on the mitochondrial intermembrane side.

It belongs to the cytochrome b560 family. As to quaternary structure, component of complex II composed of four subunits: a flavoprotein (FP), iron-sulfur protein (IP), and a cytochrome b560 composed of two integral membrane proteins. Heme is required as a cofactor.

It localises to the mitochondrion inner membrane. Its pathway is carbohydrate metabolism; tricarboxylic acid cycle. Membrane-anchoring subunit of succinate dehydrogenase (SDH) that is involved in complex II of the mitochondrial electron transport chain and is responsible for transferring electrons from succinate to ubiquinone (coenzyme Q). Mediates resistance to enteropathogenic E.coli infection. The polypeptide is Succinate dehydrogenase cytochrome b560 subunit, mitochondrial (mev-1) (Caenorhabditis elegans).